We begin with the raw amino-acid sequence, 309 residues long: Ribonuclease Z (309 aa).

7 residues coordinate Zn(2+): His-63, His-65, Asp-67, His-68, His-145, Asp-216, and His-274. The active-site Proton acceptor is the Asp-67.

It belongs to the RNase Z family. Homodimer. Zn(2+) is required as a cofactor.

It catalyses the reaction Endonucleolytic cleavage of RNA, removing extra 3' nucleotides from tRNA precursor, generating 3' termini of tRNAs. A 3'-hydroxy group is left at the tRNA terminus and a 5'-phosphoryl group is left at the trailer molecule.. Functionally, zinc phosphodiesterase, which displays some tRNA 3'-processing endonuclease activity. Probably involved in tRNA maturation, by removing a 3'-trailer from precursor tRNA. This chain is Ribonuclease Z, found in Streptococcus pneumoniae serotype 2 (strain D39 / NCTC 7466).